A 450-amino-acid chain; its full sequence is Zinc finger protein 277 (450 aa).

A2 is modified (N-acetylalanine). 2 consecutive C2H2-type zinc fingers follow at residues 224-248 (LQCLYCEKTFRDKNTLKDHMRKKQH) and 355-381 (HQCRCYGCHVKFKSKADLRTHMEETKH).

This sequence belongs to the ZNF277 family. Interacts (via zinc-finger domains) with RPS2/40S ribosomal protein S2, perhaps as nascent RPS2 is synthesized during translation; the interaction is direct; the interaction is extra-ribosomal. Interaction with RPS2 competes with the binding of RPS2 to protein arginine methyltransferase PRMT3. Interacts with Polycomb group (PcG) complex protein BMI1. May be part of a complex including at least ZNF277, BMI1 and RNF2/RING2.

It localises to the nucleus. Probable transcription factor. Involved in modulation of cellular senescence; represses transcription of the tumor suppressor gene INK4A/ARF, perhaps acting via the Polycomb group (PcG) complex PRC1. This Homo sapiens (Human) protein is Zinc finger protein 277 (ZNF277).